Reading from the N-terminus, the 346-residue chain is Phosphoribosylformylglycinamidine cyclo-ligase (346 aa).

Belongs to the AIR synthase family.

The protein localises to the cytoplasm. It catalyses the reaction 2-formamido-N(1)-(5-O-phospho-beta-D-ribosyl)acetamidine + ATP = 5-amino-1-(5-phospho-beta-D-ribosyl)imidazole + ADP + phosphate + H(+). It functions in the pathway purine metabolism; IMP biosynthesis via de novo pathway; 5-amino-1-(5-phospho-D-ribosyl)imidazole from N(2)-formyl-N(1)-(5-phospho-D-ribosyl)glycinamide: step 2/2. The polypeptide is Phosphoribosylformylglycinamidine cyclo-ligase (Polaromonas sp. (strain JS666 / ATCC BAA-500)).